The primary structure comprises 1663 residues: Centrosomal protein of 152 kDa (1663 aa).

The disordered stretch occupies residues 1–60 (MSIDFDSGALQTQQEDEEYDKEDYAREQELQQLLTDLPHDMLDDSLSSSPEPSYSDCSGH). Residues 44–57 (DSLSSSPEPSYSDC) show a composition bias toward low complexity. Coiled coils occupy residues 266 to 516 (LQVL…ARLG), 571 to 664 (ELER…KHLL), 696 to 796 (QDKK…VTAK), 843 to 886 (SDCI…VEVA), 946 to 977 (DFTV…ALLK), 1014 to 1047 (RNKL…AERL), and 1182 to 1288 (VQQL…KNDM). 2 disordered regions span residues 1383–1408 (ETTQ…NQNI) and 1595–1628 (KRKD…SDVG). Over residues 1603 to 1613 (RKYSNKIQEPS) the composition is skewed to polar residues.

Belongs to the CEP152 family.

It is found in the cytoplasm. The protein localises to the cytoskeleton. The protein resides in the microtubule organizing center. It localises to the centrosome. Its subcellular location is the centriole. Its function is as follows. Necessary for centrosome duplication; the function also seems to involve cep63, cdk5rap2 and wdr62 through a stepwise assembled complex at the centrosome that recruits cdk2 required for centriole duplication. Acts as a molecular scaffold facilitating the interaction of plk4 and cpap, 2 molecules involved in centriole formation. Also plays a key role in deuterosome-mediated centriole amplification in multiciliated that can generate more than 100 centrioles. Overexpression of cep152 can drive amplification of centrioles. The chain is Centrosomal protein of 152 kDa (cep152) from Xenopus laevis (African clawed frog).